The following is a 299-amino-acid chain: Very long chain fatty acid elongase 5 (299 aa).

At methionine 1 the chain carries N-acetylmethionine. 7 helical membrane-spanning segments follow: residues 26 to 46, 64 to 84, 112 to 132, 139 to 158, 168 to 187, 205 to 225, and 226 to 246; these read WFLLDNYVPTLVCSILYLLIV, ILVVYNLGLTLLSLYMFCELV, VLWWYYFSKLIEFMDTFFFIL, ITVLHVYHHASMLNIWWFVM, FGATLNSFIHVLMYSYYGLS, GQLLQFVLTIIQTSCGVIWPC, and TFPLGWLYFQIGYMISLITLF. Serine 285 is subject to Phosphoserine.

Belongs to the ELO family. ELOVL5 subfamily. In terms of assembly, interacts with TECR.

The protein resides in the endoplasmic reticulum membrane. Its subcellular location is the cell projection. It is found in the dendrite. It carries out the reaction a very-long-chain acyl-CoA + malonyl-CoA + H(+) = a very-long-chain 3-oxoacyl-CoA + CO2 + CoA. The enzyme catalyses (6Z,9Z,12Z)-octadecatrienoyl-CoA + malonyl-CoA + H(+) = (8Z,11Z,14Z)-3-oxoeicosatrienoyl-CoA + CO2 + CoA. It catalyses the reaction (9Z,12Z,15Z)-octadecatrienoyl-CoA + malonyl-CoA + H(+) = (11Z,14Z,17Z)-3-oxoeicosatrienoyl-CoA + CO2 + CoA. The catalysed reaction is (9Z)-hexadecenoyl-CoA + malonyl-CoA + H(+) = 3-oxo-(11Z)-octadecenoyl-CoA + CO2 + CoA. It carries out the reaction (9Z)-octadecenoyl-CoA + malonyl-CoA + H(+) = 3-oxo-(11Z)-eicosenoyl-CoA + CO2 + CoA. The enzyme catalyses (11Z)-octadecenoyl-CoA + malonyl-CoA + H(+) = 3-oxo-(13Z)-eicosenoyl-CoA + CO2 + CoA. It catalyses the reaction (9Z,12Z)-octadecadienoyl-CoA + malonyl-CoA + H(+) = (11Z,14Z)-3-oxoicosa-11,14-dienoyl-CoA + CO2 + CoA. The catalysed reaction is (6Z,9Z,12Z,15Z)-octadecatetraenoyl-CoA + malonyl-CoA + H(+) = (8Z,11Z,14Z,17Z)-3-oxoicosatetraenoyl-CoA + CO2 + CoA. It carries out the reaction (5Z,8Z,11Z,14Z)-eicosatetraenoyl-CoA + malonyl-CoA + H(+) = (7Z,10Z,13Z,16Z)-3-oxodocosatetraenoyl-CoA + CO2 + CoA. The enzyme catalyses (5Z,8Z,11Z,14Z,17Z)-eicosapentaenoyl-CoA + malonyl-CoA + H(+) = 3-oxo-(7Z,10Z,13Z,16Z,19Z)-docosapentaenoyl-CoA + CO2 + CoA. It functions in the pathway lipid metabolism; polyunsaturated fatty acid biosynthesis. In terms of biological role, catalyzes the first and rate-limiting reaction of the four reactions that constitute the long-chain fatty acids elongation cycle. This endoplasmic reticulum-bound enzymatic process allows the addition of 2 carbons to the chain of long- and very long-chain fatty acids (VLCFAs) per cycle. Condensing enzyme that acts specifically toward polyunsaturated acyl-CoA with the higher activity toward C18:3(n-6) acyl-CoA. May participate in the production of monounsaturated and of polyunsaturated VLCFAs of different chain lengths that are involved in multiple biological processes as precursors of membrane lipids and lipid mediators. In conditions where the essential linoleic and alpha linoleic fatty acids are lacking it is also involved in the synthesis of Mead acid from oleic acid. The polypeptide is Very long chain fatty acid elongase 5 (Bos taurus (Bovine)).